The following is a 100-amino-acid chain: NADH-quinone oxidoreductase subunit K (100 aa).

The next 3 helical transmembrane spans lie at 4 to 24 (LQHG…GLVI), 28 to 48 (LLFM…AFVV), and 60 to 80 (VMYI…LALL).

This sequence belongs to the complex I subunit 4L family. In terms of assembly, NDH-1 is composed of 13 different subunits. Subunits NuoA, H, J, K, L, M, N constitute the membrane sector of the complex.

Its subcellular location is the cell inner membrane. The enzyme catalyses a quinone + NADH + 5 H(+)(in) = a quinol + NAD(+) + 4 H(+)(out). Its function is as follows. NDH-1 shuttles electrons from NADH, via FMN and iron-sulfur (Fe-S) centers, to quinones in the respiratory chain. The immediate electron acceptor for the enzyme in this species is believed to be ubiquinone. Couples the redox reaction to proton translocation (for every two electrons transferred, four hydrogen ions are translocated across the cytoplasmic membrane), and thus conserves the redox energy in a proton gradient. This chain is NADH-quinone oxidoreductase subunit K, found in Musicola paradisiaca (strain Ech703) (Dickeya paradisiaca).